Here is a 524-residue protein sequence, read N- to C-terminus: Adhesion G-protein coupled receptor G5 (524 aa).

Residues 1-23 form the signal peptide; it reads MDPHGALFFYLCLLAAQVVLVET. Residues 24 to 246 are Extracellular-facing; the sequence is LSDLLVLMKR…PAELQVPLEY (223 aa). 6 N-linked (GlcNAc...) asparagine glycosylation sites follow: Asn58, Asn65, Asn96, Asn143, Asn169, and Asn175. One can recognise a GAIN-B domain in the interval 74–235; sequence QSLVFKLSCD…AVLMQLSGDP (162 aa). 2 cysteine pairs are disulfide-bonded: Cys185–Cys217 and Cys205–Cys219. Residues 185 to 235 form a GPS region; that stretch reads CVFWKEGASKSSWGAWSPEGCYTEQPSATQVLCHCNHLTYFAVLMQLSGDP. The stachel stretch occupies residues 224–232; that stretch reads YFAVLMQLS. The chain crosses the membrane as a helical span at residues 247–267; the sequence is ISFVGCSISIVASLLTILLYA. Topologically, residues 268 to 284 are cytoplasmic; sequence QSRKQSDSTTRIHMNLN. A helical membrane pass occupies residues 285–305; sequence GSVLLLNVTFLLSSQMTLPTM. The Extracellular segment spans residues 306 to 319; that stretch reads PRPVCKVLAAVLHY. Cys310 and Cys400 are oxidised to a cystine. Residues 320–340 form a helical membrane-spanning segment; that stretch reads ALLSSLTWMAIEGFNLYLFLG. Residues 341–351 lie on the Cytoplasmic side of the membrane; that stretch reads RVYNAYIRRYL. Residues 352–372 form a helical membrane-spanning segment; that stretch reads LKLCMLGWGFPALLVLLLLMI. Residues 373–413 are Extracellular-facing; it reads KSSVYGPCVTSLSKSQENGTGFQNVSMCWIRSPMVHSILVM. Residues Asn390 and Asn396 are each glycosylated (N-linked (GlcNAc...) asparagine). The helical transmembrane segment at 414 to 434 threads the bilayer; that stretch reads GYGGFTSLFNLVVLAWALWIL. Over 435-453 the chain is Cytoplasmic; sequence CRLRAREKALSPWAYRDTA. Residues 454–476 traverse the membrane as a helical segment; the sequence is MVLGLTVLLGTTWTLAFFSFGVF. Topologically, residues 477 to 480 are extracellular; the sequence is LLPQ. Residues 481–500 form a helical membrane-spanning segment; that stretch reads LFLFTIFNSLYGFFLFLWFC. Topologically, residues 501–524 are cytoplasmic; that stretch reads SQKRYSDAEAKAEMEAVSSSQMTH.

Belongs to the G-protein coupled receptor 2 family. Adhesion G-protein coupled receptor (ADGR) subfamily. In terms of assembly, heterodimer of 2 chains generated by proteolytic processing; the large extracellular N-terminal fragment and the membrane-bound C-terminal fragment predominantly remain associated and non-covalently linked. Autoproteolytically processed at the GPS region of the GAIN-B domain; this cleavage modulates receptor activity. As to expression, expressed at least in kidney, heart, brain and spleen. In terms of tissue distribution, isoform 1 is predominant in spleen. In the kidney, both isoform 1 and isoform 2 are expressed at similar levels. Isoform 2 is the major form in heart and brain. In the kidney, both isoform 1 and isoform 2 are expressed at similar levels.

The protein localises to the cell membrane. Its activity is regulated as follows. Forms a heterodimer of 2 chains generated by proteolytic processing that remain associated through non-covalent interactions mediated by the GAIN-B domain. In the inactivated receptor, the Stachel sequence (also named stalk) is embedded in the GAIN-B domain, where it adopts a beta-strand conformation. On activation, the Stachel moves into the 7 transmembrane region and adopts a twisted hook-shaped configuration that forms contacts within the receptor, leading to coupling of a G-alpha protein, which activates signaling. The cleaved GAIN-B and N-terminal domains can then dissociate from the rest of the receptor. Functionally, orphan adhesion G-protein coupled receptor (aGPCR). Ligand binding causes a conformation change that triggers signaling via guanine nucleotide-binding proteins (G proteins) and modulates the activity of downstream effectors, such as adenylate cyclase. ADGRG5 is specifically coupled to G(s) G proteins and mediates activation of adenylate cyclase activity. In terms of biological role, isoform 1, but not isoform 2, is constitutively active, as evidenced by elevated basal cAMP levels, and responds to mechanical activation (shaking). In Mus musculus (Mouse), this protein is Adhesion G-protein coupled receptor G5.